The chain runs to 60 residues: Large ribosomal subunit protein bL32 (60 aa).

Residues 1–19 show a composition bias toward basic residues; it reads MAVPKRKKSKSRRNMHRSH. The tract at residues 1 to 24 is disordered; the sequence is MAVPKRKKSKSRRNMHRSHHAIEP.

Belongs to the bacterial ribosomal protein bL32 family.

In Wolbachia pipientis wMel, this protein is Large ribosomal subunit protein bL32.